Consider the following 263-residue polypeptide: Phosphatidylglycerol--prolipoprotein diacylglyceryl transferase (263 aa).

Helical transmembrane passes span 16-36 (LAVSWYSLSYVVGILFGWFYA), 55-75 (FVTYAIIGIIVGGRLGYILLY), 92-112 (EGGMSFHGGAIGVIIAAYIFC), and 117-137 (LNFLSLTDIIAPVVPIGLFFG). Arg138 is a binding site for a 1,2-diacyl-sn-glycero-3-phospho-(1'-sn-glycerol). Transmembrane regions (helical) follow at residues 172–192 (QLYEAFFEGLVLFCILAYAVF), 201–221 (GLNSGLFLMFYSLFRIIIEIF), and 234–254 (SLTMGQILSMPLLLLGIYLII).

It belongs to the Lgt family.

The protein localises to the cell inner membrane. The enzyme catalyses L-cysteinyl-[prolipoprotein] + a 1,2-diacyl-sn-glycero-3-phospho-(1'-sn-glycerol) = an S-1,2-diacyl-sn-glyceryl-L-cysteinyl-[prolipoprotein] + sn-glycerol 1-phosphate + H(+). Its pathway is protein modification; lipoprotein biosynthesis (diacylglyceryl transfer). Functionally, catalyzes the transfer of the diacylglyceryl group from phosphatidylglycerol to the sulfhydryl group of the N-terminal cysteine of a prolipoprotein, the first step in the formation of mature lipoproteins. The polypeptide is Phosphatidylglycerol--prolipoprotein diacylglyceryl transferase (Rickettsia bellii (strain OSU 85-389)).